The following is a 204-amino-acid chain: Probable nicotinate-nucleotide adenylyltransferase (204 aa).

It belongs to the NadD family.

It catalyses the reaction nicotinate beta-D-ribonucleotide + ATP + H(+) = deamido-NAD(+) + diphosphate. It functions in the pathway cofactor biosynthesis; NAD(+) biosynthesis; deamido-NAD(+) from nicotinate D-ribonucleotide: step 1/1. Catalyzes the reversible adenylation of nicotinate mononucleotide (NaMN) to nicotinic acid adenine dinucleotide (NaAD). The sequence is that of Probable nicotinate-nucleotide adenylyltransferase from Clostridium beijerinckii (strain ATCC 51743 / NCIMB 8052) (Clostridium acetobutylicum).